Here is a 418-residue protein sequence, read N- to C-terminus: Deoxyribonuclease Tat-D (418 aa).

Positions 185, 226, 277, and 327 each coordinate a divalent metal cation.

It belongs to the metallo-dependent hydrolases superfamily. TatD-type hydrolase family. The cofactor is Mg(2+).

It localises to the cytoplasm. In terms of biological role, has both endo- and exonuclease activities. Incises double-stranded DNA without obvious specificity via its endonuclease activity and excises the DNA from the 3'-to 5'-end by its exonuclease activity. May have a role in apoptosis. The polypeptide is Deoxyribonuclease Tat-D (Saccharomyces cerevisiae (strain ATCC 204508 / S288c) (Baker's yeast)).